The sequence spans 109 residues: Phosphoribosyl-AMP cyclohydrolase (109 aa).

Aspartate 80 provides a ligand contact to Mg(2+). Cysteine 81 is a Zn(2+) binding site. Residues aspartate 82 and aspartate 84 each contribute to the Mg(2+) site. 2 residues coordinate Zn(2+): cysteine 97 and cysteine 104.

Belongs to the PRA-CH family. Homodimer. Mg(2+) serves as cofactor. Zn(2+) is required as a cofactor.

It is found in the cytoplasm. It catalyses the reaction 1-(5-phospho-beta-D-ribosyl)-5'-AMP + H2O = 1-(5-phospho-beta-D-ribosyl)-5-[(5-phospho-beta-D-ribosylamino)methylideneamino]imidazole-4-carboxamide. It functions in the pathway amino-acid biosynthesis; L-histidine biosynthesis; L-histidine from 5-phospho-alpha-D-ribose 1-diphosphate: step 3/9. Functionally, catalyzes the hydrolysis of the adenine ring of phosphoribosyl-AMP. The protein is Phosphoribosyl-AMP cyclohydrolase of Clostridium botulinum (strain Alaska E43 / Type E3).